The chain runs to 460 residues: Chromosomal replication initiator protein DnaA (460 aa).

Residues 1 to 84 (MAVSLWQQCI…RFDIGSRPSA (84 aa)) are domain I, interacts with DnaA modulators. A domain II region spans residues 84–123 (AKKPEPAPVAAVRVPNPQTKASVGTSFNTTEPVANANHRS). The segment at 124-340 (NINPTYQFDN…GALNRVIANA (217 aa)) is domain III, AAA+ region. Residues G168, G170, K171, and T172 each contribute to the ATP site. The interval 341–460 (NFTGRPITID…YANLIRTLSS (120 aa)) is domain IV, binds dsDNA.

This sequence belongs to the DnaA family. As to quaternary structure, oligomerizes as a right-handed, spiral filament on DNA at oriC.

The protein resides in the cytoplasm. Its function is as follows. Plays an essential role in the initiation and regulation of chromosomal replication. ATP-DnaA binds to the origin of replication (oriC) to initiate formation of the DNA replication initiation complex once per cell cycle. Binds the DnaA box (a 9 base pair repeat at the origin) and separates the double-stranded (ds)DNA. Forms a right-handed helical filament on oriC DNA; dsDNA binds to the exterior of the filament while single-stranded (ss)DNA is stabiized in the filament's interior. The ATP-DnaA-oriC complex binds and stabilizes one strand of the AT-rich DNA unwinding element (DUE), permitting loading of DNA polymerase. After initiation quickly degrades to an ADP-DnaA complex that is not apt for DNA replication. Binds acidic phospholipids. The polypeptide is Chromosomal replication initiator protein DnaA (Shewanella sp. (strain ANA-3)).